Here is a 380-residue protein sequence, read N- to C-terminus: Erythronate-4-phosphate dehydrogenase (380 aa).

Residues Ser-45 and Thr-66 each contribute to the substrate site. Residues 126 to 127, Asp-146, Thr-175, 206 to 208, and Asp-232 each bind NAD(+); these read QV and ASR. Residue Arg-208 is part of the active site. Glu-237 is an active-site residue. His-254 acts as the Proton donor in catalysis. Residue Gly-257 coordinates NAD(+). Substrate is bound at residue Tyr-258.

The protein belongs to the D-isomer specific 2-hydroxyacid dehydrogenase family. PdxB subfamily. As to quaternary structure, homodimer.

The protein localises to the cytoplasm. The enzyme catalyses 4-phospho-D-erythronate + NAD(+) = (R)-3-hydroxy-2-oxo-4-phosphooxybutanoate + NADH + H(+). It functions in the pathway cofactor biosynthesis; pyridoxine 5'-phosphate biosynthesis; pyridoxine 5'-phosphate from D-erythrose 4-phosphate: step 2/5. Functionally, catalyzes the oxidation of erythronate-4-phosphate to 3-hydroxy-2-oxo-4-phosphonooxybutanoate. The chain is Erythronate-4-phosphate dehydrogenase from Pseudomonas aeruginosa (strain UCBPP-PA14).